A 435-amino-acid polypeptide reads, in one-letter code: ATP-dependent protease ATPase subunit HslU (435 aa).

Residues Ile-18, 60 to 65, Asp-248, Glu-313, and Arg-385 each bind ATP; that span reads GVGKTE.

It belongs to the ClpX chaperone family. HslU subfamily. As to quaternary structure, a double ring-shaped homohexamer of HslV is capped on each side by a ring-shaped HslU homohexamer. The assembly of the HslU/HslV complex is dependent on binding of ATP.

It is found in the cytoplasm. In terms of biological role, ATPase subunit of a proteasome-like degradation complex; this subunit has chaperone activity. The binding of ATP and its subsequent hydrolysis by HslU are essential for unfolding of protein substrates subsequently hydrolyzed by HslV. HslU recognizes the N-terminal part of its protein substrates and unfolds these before they are guided to HslV for hydrolysis. This Agrobacterium fabrum (strain C58 / ATCC 33970) (Agrobacterium tumefaciens (strain C58)) protein is ATP-dependent protease ATPase subunit HslU.